A 363-amino-acid polypeptide reads, in one-letter code: UDP-N-acetylglucosamine--N-acetylmuramyl-(pentapeptide) pyrophosphoryl-undecaprenol N-acetylglucosamine transferase (363 aa).

Residues 21–23, N129, R170, S196, and Q290 each bind UDP-N-acetyl-alpha-D-glucosamine; that span reads TGG.

The protein belongs to the glycosyltransferase 28 family. MurG subfamily.

Its subcellular location is the cell inner membrane. It carries out the reaction di-trans,octa-cis-undecaprenyl diphospho-N-acetyl-alpha-D-muramoyl-L-alanyl-D-glutamyl-meso-2,6-diaminopimeloyl-D-alanyl-D-alanine + UDP-N-acetyl-alpha-D-glucosamine = di-trans,octa-cis-undecaprenyl diphospho-[N-acetyl-alpha-D-glucosaminyl-(1-&gt;4)]-N-acetyl-alpha-D-muramoyl-L-alanyl-D-glutamyl-meso-2,6-diaminopimeloyl-D-alanyl-D-alanine + UDP + H(+). It functions in the pathway cell wall biogenesis; peptidoglycan biosynthesis. In terms of biological role, cell wall formation. Catalyzes the transfer of a GlcNAc subunit on undecaprenyl-pyrophosphoryl-MurNAc-pentapeptide (lipid intermediate I) to form undecaprenyl-pyrophosphoryl-MurNAc-(pentapeptide)GlcNAc (lipid intermediate II). This chain is UDP-N-acetylglucosamine--N-acetylmuramyl-(pentapeptide) pyrophosphoryl-undecaprenol N-acetylglucosamine transferase, found in Synechococcus sp. (strain ATCC 27144 / PCC 6301 / SAUG 1402/1) (Anacystis nidulans).